The primary structure comprises 273 residues: Karrikin insensitive 2 receptor B (273 aa).

Catalysis depends on S95, which acts as the Nucleophile. D217 is a catalytic residue.

This sequence belongs to the AB hydrolase superfamily. In terms of tissue distribution, expressed in stigma.

Its subcellular location is the nucleus. It localises to the cytoplasm. Its function is as follows. May be involved in plant olfaction during volatile communication. In Petunia hybrida (Petunia), this protein is Karrikin insensitive 2 receptor B.